We begin with the raw amino-acid sequence, 405 residues long: Elongation factor Tu (405 aa).

The region spanning 10–215 (KPHVNVGTIG…AIDAYIPTPE (206 aa)) is the tr-type G domain. Positions 19–26 (GHVDHGKT) are G1. 19–26 (GHVDHGKT) serves as a coordination point for GTP. Thr26 serves as a coordination point for Mg(2+). The interval 61-65 (GITIN) is G2. A G3 region spans residues 82-85 (DCPG). GTP is bound by residues 82-86 (DCPGH) and 137-140 (NKVD). The segment at 137 to 140 (NKVD) is G4. A G5 region spans residues 175-177 (SAL).

Belongs to the TRAFAC class translation factor GTPase superfamily. Classic translation factor GTPase family. EF-Tu/EF-1A subfamily. As to quaternary structure, monomer.

It localises to the cytoplasm. The enzyme catalyses GTP + H2O = GDP + phosphate + H(+). Functionally, GTP hydrolase that promotes the GTP-dependent binding of aminoacyl-tRNA to the A-site of ribosomes during protein biosynthesis. In Deinococcus geothermalis (strain DSM 11300 / CIP 105573 / AG-3a), this protein is Elongation factor Tu.